The chain runs to 547 residues: Chaperonin GroEL (547 aa).

ATP-binding positions include Thr-30–Pro-33, Lys-51, Asp-87–Thr-91, Gly-415, and Asp-496.

It belongs to the chaperonin (HSP60) family. Forms a cylinder of 14 subunits composed of two heptameric rings stacked back-to-back. Interacts with the co-chaperonin GroES.

The protein localises to the cytoplasm. It catalyses the reaction ATP + H2O + a folded polypeptide = ADP + phosphate + an unfolded polypeptide.. Together with its co-chaperonin GroES, plays an essential role in assisting protein folding. The GroEL-GroES system forms a nano-cage that allows encapsulation of the non-native substrate proteins and provides a physical environment optimized to promote and accelerate protein folding. This chain is Chaperonin GroEL, found in Haemophilus ducreyi (strain 35000HP / ATCC 700724).